A 561-amino-acid polypeptide reads, in one-letter code: MPESKLNSPLRYHGIYNAPHRAFLRSVGLTDGEINKPLVAVATAWSEAGPCNFHTLSLAHVAKEGAKEGGLTPLAFPTIVVNDNIGMGTEGMRYSLVSRDLIADMVEAQFNAHAFDALIGIGGCDKTTPGILMAMARLNVPSIYIYGGSAEPGFYLGRRLTIEDVHEAIGAFIAGKIDEHELYEIEKRAHPTVGTCSGMFTANTMGSMSEALGMALPGSASPTATSSRRIMYVRETGKAVSRLLENGVKSRDILTFEAFENAIAVLMAMGGSTNAVLHLLAIAYEAGVKLTLDDFNRISKRTPYIGSLKPGGDYVMADLDEVGGVPLVMKKLLDAGLLNGDVLTVTGKTMKQNLQEYRIPNVPHNHIVKDVKNPIKPRGGIVILKGSLAPEGAVIKVAATNVTKFEGKAKVYNSEEQAFKGIQSNEVKDGEVVVIRYEGPKGGPGMPEMLRVTAAIVGAGLSNVAMVTDGRFSGATRGPMVGHVAPEAMVGGPIAIVEDGDVIVIDVENERLDIKLSDAEIKRRLNNWSPPEPRYKSGLLAKYASLVAQSSMGAVTRPVIK.

Residue cysteine 51 coordinates [2Fe-2S] cluster. Residue aspartate 83 coordinates Mg(2+). A [2Fe-2S] cluster-binding site is contributed by cysteine 124. Mg(2+)-binding residues include aspartate 125 and lysine 126. Lysine 126 carries the N6-carboxylysine modification. Cysteine 196 is a [2Fe-2S] cluster binding site. Glutamate 448 serves as a coordination point for Mg(2+). Serine 473 serves as the catalytic Proton acceptor.

The protein belongs to the IlvD/Edd family. In terms of assembly, homodimer. [2Fe-2S] cluster serves as cofactor. The cofactor is Mg(2+).

It catalyses the reaction (2R)-2,3-dihydroxy-3-methylbutanoate = 3-methyl-2-oxobutanoate + H2O. The catalysed reaction is (2R,3R)-2,3-dihydroxy-3-methylpentanoate = (S)-3-methyl-2-oxopentanoate + H2O. The protein operates within amino-acid biosynthesis; L-isoleucine biosynthesis; L-isoleucine from 2-oxobutanoate: step 3/4. Its pathway is amino-acid biosynthesis; L-valine biosynthesis; L-valine from pyruvate: step 3/4. In terms of biological role, functions in the biosynthesis of branched-chain amino acids. Catalyzes the dehydration of (2R,3R)-2,3-dihydroxy-3-methylpentanoate (2,3-dihydroxy-3-methylvalerate) into 2-oxo-3-methylpentanoate (2-oxo-3-methylvalerate) and of (2R)-2,3-dihydroxy-3-methylbutanoate (2,3-dihydroxyisovalerate) into 2-oxo-3-methylbutanoate (2-oxoisovalerate), the penultimate precursor to L-isoleucine and L-valine, respectively. This is Dihydroxy-acid dehydratase from Sulfolobus acidocaldarius (strain ATCC 33909 / DSM 639 / JCM 8929 / NBRC 15157 / NCIMB 11770).